The following is a 98-amino-acid chain: Protein S100-A13 (98 aa).

An EF-hand domain is found at 18 to 53 (TTFFTFAGREGRKGSLSVNEFKELVTQQLPHLLKDV). S32, E37, D64, N66, D68, E70, and E75 together coordinate Ca(2+). At S32 the chain carries Phosphoserine.

It belongs to the S-100 family. Homodimer. Part of a copper-dependent multiprotein complex containing S100A13, FGF1 and SYT1. Interacts with FGF1 and SYT1. Interacts with IL1A.

Its subcellular location is the cytoplasm. The protein resides in the secreted. Its function is as follows. Plays a role in the export of proteins that lack a signal peptide and are secreted by an alternative pathway. Binds two calcium ions per subunit. Binds one copper ion. Binding of one copper ion does not interfere with calcium binding. Required for the copper-dependent stress-induced export of IL1A and FGF1. The calcium-free protein binds to lipid vesicles containing phosphatidylserine, but not to vesicles containing phosphatidylcholine. The polypeptide is Protein S100-A13 (S100A13) (Bos taurus (Bovine)).